Consider the following 265-residue polypeptide: Undecaprenyl-diphosphatase 1 (265 aa).

7 consecutive transmembrane segments (helical) span residues 4–24 (IIIA…PISS), 42–62 (AKTF…ILYH), 84–104 (FHVF…HDVI), 108–128 (LFQP…MILA), 184–204 (SEFS…LDLL), 217–237 (MFAV…VTFL), and 245–265 (LKPF…FVLL).

Belongs to the UppP family.

The protein localises to the cell membrane. The catalysed reaction is di-trans,octa-cis-undecaprenyl diphosphate + H2O = di-trans,octa-cis-undecaprenyl phosphate + phosphate + H(+). Functionally, catalyzes the dephosphorylation of undecaprenyl diphosphate (UPP). Confers resistance to bacitracin. The polypeptide is Undecaprenyl-diphosphatase 1 (Bacillus cereus (strain ZK / E33L)).